The chain runs to 405 residues: Diaminohydroxyphosphoribosylamino-pyrimidine deaminase (405 aa).

The region spanning 256–383 is the CMP/dCMP-type deaminase domain; it reads YNHEEYMLKA…DLLKKAGIVV (128 aa). His305 is a binding site for Zn(2+). Glu307 functions as the Proton donor in the catalytic mechanism. Positions 335 and 345 each coordinate Zn(2+).

Belongs to the cytidine and deoxycytidylate deaminase family. Zn(2+) serves as cofactor.

The protein localises to the cytoplasm. Its subcellular location is the nucleus. It carries out the reaction 2,5-diamino-6-hydroxy-4-(5-phosphoribosylamino)-pyrimidine + H2O + H(+) = 5-amino-6-(5-phospho-D-ribosylamino)uracil + NH4(+). It functions in the pathway cofactor biosynthesis; riboflavin biosynthesis; 5-amino-6-(D-ribitylamino)uracil from GTP: step 2/4. Functionally, involved in riboflavin biosynthesis. Converts 2,5-diamino-6-(ribosylamino)-4(3H)-pyrimidinone 5'-phosphate into 5-amino-6-(ribosylamino)-2,4(1H,3H)-pyrimidinedione 5'-phosphate. The protein is Diaminohydroxyphosphoribosylamino-pyrimidine deaminase of Schizosaccharomyces pombe (strain 972 / ATCC 24843) (Fission yeast).